The following is a 144-amino-acid chain: NADH dehydrogenase [ubiquinone] 1 alpha subcomplex subunit 13 (144 aa).

Ala-2 bears the N-acetylalanine mark. The chain crosses the membrane as a helical span at residues 30–51 (LSGYSMFAVGIGALLFGYWSMM).

In terms of assembly, complex I is composed of 45 different subunits. Interacts with CARD15, but not with CARD4. Interacts with STAT3, but not with STAT1, STAT2 and STAT5A. Interacts with OLFM4.

It is found in the mitochondrion inner membrane. It localises to the nucleus. Functionally, accessory subunit of the mitochondrial membrane respiratory chain NADH dehydrogenase (Complex I), that is believed not to be involved in catalysis. Complex I functions in the transfer of electrons from NADH to the respiratory chain. The immediate electron acceptor for the enzyme is believed to be ubiquinone. Involved in the interferon/all-trans-retinoic acid (IFN/RA) induced cell death. This apoptotic activity is inhibited by interaction with viral IRF1. Prevents the transactivation of STAT3 target genes. May play a role in CARD15-mediated innate mucosal responses and serve to regulate intestinal epithelial cell responses to microbes. The polypeptide is NADH dehydrogenase [ubiquinone] 1 alpha subcomplex subunit 13 (NDUFA13) (Bos taurus (Bovine)).